Consider the following 305-residue polypeptide: Serine/threonine-protein kinase 16 (305 aa).

A lipid anchor (N-myristoyl glycine) is attached at Gly2. 2 S-palmitoyl cysteine lipidation sites follow: Cys6 and Cys8. The Protein kinase domain occupies 20–293 (YLFVQKLGEG…PVLLSQLEAL (274 aa)). ATP-binding positions include 26–34 (LGEGGFSYV) and Lys49. Catalysis depends on Asp148, which acts as the Proton acceptor. An activation loop region spans residues 166–202 (DLGSMNQACIQVEGSRQALALQDWAAQRCTISYRAPE). A Phosphoserine; by autocatalysis modification is found at Ser197. Phosphotyrosine; by autocatalysis is present on Tyr198.

It belongs to the protein kinase superfamily. Ser/Thr protein kinase family. In terms of assembly, monomer. Interacts with DRG1 (via its N-terminal); the interaction phosphorylates DRG1. Post-translationally, mainly autophosphorylated on serine/threonine residues. Also autophosphorylated on Tyr-198. Expressed in heart, liver, brain, spleen, lung, skeletal muscle, kidney and testis.

The protein localises to the cytoplasm. It localises to the perinuclear region. It is found in the membrane. It catalyses the reaction L-seryl-[protein] + ATP = O-phospho-L-seryl-[protein] + ADP + H(+). It carries out the reaction L-threonyl-[protein] + ATP = O-phospho-L-threonyl-[protein] + ADP + H(+). The catalysed reaction is L-tyrosyl-[protein] + ATP = O-phospho-L-tyrosyl-[protein] + ADP + H(+). Its function is as follows. Membrane-associated protein kinase that phosphorylates on serine and threonine residues. In vitro substrates include DRG1, ENO1 and EIF4EBP1. Also autophosphorylates. May be involved in secretory vesicle trafficking or intracellular signaling. May have a role in regulating stromal-epithelial interactions that occur during ductal morphogenesis in the mammary gland. May be involved in TGF-beta signaling. Able to autophosphorylate on Tyr residue; it is however unclear whether it has tyrosine-protein kinase toward other proteins. This Rattus norvegicus (Rat) protein is Serine/threonine-protein kinase 16 (Stk16).